Reading from the N-terminus, the 343-residue chain is NADH-quinone oxidoreductase subunit H (343 aa).

8 consecutive transmembrane segments (helical) span residues 5–25 (FIIE…LMAM), 76–96 (FLFV…SAVI), 119–139 (ALLY…IGGW), 158–178 (VSYE…TGTL), 190–210 (MNWN…CAFA), 243–263 (LFAE…LFFG), 284–304 (ILGF…YMWV), and 323–343 (ILIP…LLFK).

Belongs to the complex I subunit 1 family. NDH-1 is composed of 14 different subunits. Subunits NuoA, H, J, K, L, M, N constitute the membrane sector of the complex.

It localises to the cell inner membrane. It carries out the reaction a quinone + NADH + 5 H(+)(in) = a quinol + NAD(+) + 4 H(+)(out). Its function is as follows. NDH-1 shuttles electrons from NADH, via FMN and iron-sulfur (Fe-S) centers, to quinones in the respiratory chain. The immediate electron acceptor for the enzyme in this species is believed to be ubiquinone. Couples the redox reaction to proton translocation (for every two electrons transferred, four hydrogen ions are translocated across the cytoplasmic membrane), and thus conserves the redox energy in a proton gradient. This subunit may bind ubiquinone. This is NADH-quinone oxidoreductase subunit H from Flavobacterium psychrophilum (strain ATCC 49511 / DSM 21280 / CIP 103535 / JIP02/86).